We begin with the raw amino-acid sequence, 127 residues long: UPF0102 protein Gura_3756 (127 aa).

Belongs to the UPF0102 family.

In Geotalea uraniireducens (strain Rf4) (Geobacter uraniireducens), this protein is UPF0102 protein Gura_3756.